The sequence spans 229 residues: uncharacterized protein (229 aa).

Residues 1–41 (MRSAKVGVARQLETKKPQTGRKISTSSRGTIHSQQSQPEDI) form a disordered region. Residues 21-39 (RKISTSSRGTIHSQQSQPE) show a composition bias toward polar residues. EF-hand domains follow at residues 48–83 (KELK…IGLH), 84–119 (ANKA…SQNI), 123–158 (TNEE…FGDF), and 159–193 (DDEL…YLLN). Positions 61, 63, 65, 72, 97, 99, 101, 103, 108, 136, 138, 140, and 147 each coordinate Ca(2+). Residues 194–217 (DPKHDIDTGDSDVERYDDRHDDRA) show a composition bias toward basic and acidic residues. A disordered region spans residues 194 to 229 (DPKHDIDTGDSDVERYDDRHDDRASPMPNHLSTVPE).

This is an uncharacterized protein from Caenorhabditis elegans.